A 371-amino-acid polypeptide reads, in one-letter code: Putative glutamate--cysteine ligase 2 (371 aa).

It belongs to the glutamate--cysteine ligase type 2 family. YbdK subfamily.

It carries out the reaction L-cysteine + L-glutamate + ATP = gamma-L-glutamyl-L-cysteine + ADP + phosphate + H(+). Functionally, ATP-dependent carboxylate-amine ligase which exhibits weak glutamate--cysteine ligase activity. The chain is Putative glutamate--cysteine ligase 2 from Burkholderia cenocepacia (strain HI2424).